A 313-amino-acid chain; its full sequence is tRNA-cytidine(32) 2-sulfurtransferase (313 aa).

The PP-loop motif signature appears at 47–52; the sequence is SGGKDS. The [4Fe-4S] cluster site is built by C122, C125, and C213.

The protein belongs to the TtcA family. As to quaternary structure, homodimer. The cofactor is Mg(2+). It depends on [4Fe-4S] cluster as a cofactor.

It localises to the cytoplasm. The catalysed reaction is cytidine(32) in tRNA + S-sulfanyl-L-cysteinyl-[cysteine desulfurase] + AH2 + ATP = 2-thiocytidine(32) in tRNA + L-cysteinyl-[cysteine desulfurase] + A + AMP + diphosphate + H(+). The protein operates within tRNA modification. Catalyzes the ATP-dependent 2-thiolation of cytidine in position 32 of tRNA, to form 2-thiocytidine (s(2)C32). The sulfur atoms are provided by the cysteine/cysteine desulfurase (IscS) system. The polypeptide is tRNA-cytidine(32) 2-sulfurtransferase (Yersinia enterocolitica serotype O:8 / biotype 1B (strain NCTC 13174 / 8081)).